The primary structure comprises 517 residues: Facilitated trehalose transporter Tret1 (517 aa).

Residues 1–56 are Cytoplasmic-facing; it reads MWIEIPECYEVLRNVFSKFRRHSLTAAMVKLLMRADTHVSFTVPAEEPVAKCTFSQ. The helical transmembrane segment at 57 to 77 threads the bilayer; the sequence is VLAALSVSLGSMVVGFSSAYT. The Extracellular segment spans residues 78 to 100; the sequence is SPALVSMKDRNITSFEVTDQSGS. N-linked (GlcNAc...) asparagine glycosylation occurs at asparagine 88. The helical transmembrane segment at 101 to 121 threads the bilayer; the sequence is WVGGIMPLAGLVGGILGGPLI. Over 122-135 the chain is Cytoplasmic; that stretch reads EYLGRKNTILATAT. The chain crosses the membrane as a helical span at residues 136 to 156; sequence PFIISWLLIACATHVAMVLVG. Residues 157-158 lie on the Extracellular side of the membrane; sequence RA. A helical membrane pass occupies residues 159–179; the sequence is LSGFSVGVASLSLPVYLGETV. Topologically, residues 180–184 are cytoplasmic; that stretch reads QPEVR. Residues 185 to 205 form a helical membrane-spanning segment; the sequence is GTLGLLPTAFGNIGILLCFVA. Residues 206–212 are Extracellular-facing; sequence GNYMDWS. A helical membrane pass occupies residues 213–233; it reads ELAFLGATLPVPFLILMFLIP. Residues 234–296 lie on the Cytoplasmic side of the membrane; that stretch reads ETPRWYVSRG…DLLKKTNLKP (63 aa). Residues 297 to 317 form a helical membrane-spanning segment; the sequence is LLISLGLMFFQQLSGINAVIF. Residues 318-333 are Extracellular-facing; sequence YTVQIFQDAGSTIDEN. Residues 334–354 traverse the membrane as a helical segment; that stretch reads LCTIIVGVVNFIATFIATLLI. Residues 355–360 lie on the Cytoplasmic side of the membrane; that stretch reads DRLGRK. Residues 361–381 traverse the membrane as a helical segment; it reads MLLYISDIAMIITLMTLGGFF. Over 382 to 392 the chain is Extracellular; sequence YVKNNGGDVSH. Residues 393 to 413 form a helical membrane-spanning segment; the sequence is IGWLPLASFVIFVLGFSLGFG. Residues 414–437 lie on the Cytoplasmic side of the membrane; that stretch reads PIPWLMMGEILPGKIRGSAASVAT. Residues 438–458 form a helical membrane-spanning segment; the sequence is AFNWSCTFVVTKTFADIIASI. Over 459–461 the chain is Extracellular; it reads GTH. A helical transmembrane segment spans residues 462-482; the sequence is GAFWMFGSVCVVGLVFVIMYV. Residues 483-517 are Cytoplasmic-facing; the sequence is PETQGKSLEDIERKMCGRVRRMSSVANIKPLSFNM.

This sequence belongs to the major facilitator superfamily. Sugar transporter (TC 2.A.1.1) family. Trehalose transporter subfamily.

The protein localises to the cell membrane. In terms of biological role, high-capacity facilitative transporter for trehalose. Does not transport maltose, sucrose or lactose. Mediates the bidirectional transfer of trehalose. Responsible for the transport of trehalose synthesized in the fat body and the incorporation of trehalose into other tissues that require a carbon source, thereby regulating trehalose levels in the hemolymph. The chain is Facilitated trehalose transporter Tret1 from Culex quinquefasciatus (Southern house mosquito).